The sequence spans 414 residues: Imidazolonepropionase (414 aa).

Fe(3+)-binding residues include His73 and His75. Residues His73 and His75 each contribute to the Zn(2+) site. The 4-imidazolone-5-propanoate site is built by Arg82, Tyr145, and His178. Tyr145 provides a ligand contact to N-formimidoyl-L-glutamate. His249 is a Fe(3+) binding site. His249 is a binding site for Zn(2+). Gln252 provides a ligand contact to 4-imidazolone-5-propanoate. Asp324 lines the Fe(3+) pocket. Position 324 (Asp324) interacts with Zn(2+). N-formimidoyl-L-glutamate-binding residues include Asn326 and Gly328. Ser329 serves as a coordination point for 4-imidazolone-5-propanoate.

This sequence belongs to the metallo-dependent hydrolases superfamily. HutI family. The cofactor is Zn(2+). Fe(3+) serves as cofactor.

Its subcellular location is the cytoplasm. It catalyses the reaction 4-imidazolone-5-propanoate + H2O = N-formimidoyl-L-glutamate. It functions in the pathway amino-acid degradation; L-histidine degradation into L-glutamate; N-formimidoyl-L-glutamate from L-histidine: step 3/3. In terms of biological role, catalyzes the hydrolytic cleavage of the carbon-nitrogen bond in imidazolone-5-propanoate to yield N-formimidoyl-L-glutamate. It is the third step in the universal histidine degradation pathway. This is Imidazolonepropionase from Shewanella pealeana (strain ATCC 700345 / ANG-SQ1).